A 317-amino-acid chain; its full sequence is Ribosomal protein L11 methyltransferase (317 aa).

The S-adenosyl-L-methionine site is built by T158, G179, D201, and N244.

Belongs to the methyltransferase superfamily. PrmA family.

The protein localises to the cytoplasm. It carries out the reaction L-lysyl-[protein] + 3 S-adenosyl-L-methionine = N(6),N(6),N(6)-trimethyl-L-lysyl-[protein] + 3 S-adenosyl-L-homocysteine + 3 H(+). Methylates ribosomal protein L11. This chain is Ribosomal protein L11 methyltransferase, found in Streptococcus pyogenes serotype M28 (strain MGAS6180).